Reading from the N-terminus, the 361-residue chain is Velvet complex subunit B (361 aa).

Disordered regions lie at residues 1-36 and 308-340; these read MYAV…SLRQ and NGAP…VLLR. Polar residues predominate over residues 23 to 35; that stretch reads PSVQYPSGTTSLR. Residues 47–353 form the Velvet domain; it reads QDGRSWSLQV…SASALRYRVS (307 aa). Residues 323-336 are compositionally biased toward low complexity; the sequence is SLNPSRSSPPKSSP.

Belongs to the velvet family. VelB subfamily. In terms of assembly, component of the heterotrimeric velvet complex composed of laeA, veA and velB; VeA acting as a bridging protein between laeA and velB. Interacts with velA. Forms a heterodimeric complex with vosA; the formation of the velB-vosA complex is light-dependent. Interacts with vosA.

The protein resides in the nucleus. It is found in the cytoplasm. Functionally, component of the velvet transcription factor complex that controls sexual/asexual developmental ratio in response to light, promoting sexual development in the darkness while stimulating asexual sporulation under illumination. The velvet complex acts as a global regulator for secondary metabolite gene expression. Component of the velB-VosA heterodimeric complex that plays a dual role in activating genes associated with spore maturation and repressing certain development-associated genes. The velB-VosA complex binds DNA through the DNA-binding domain of vosA that recognizes an 11-nucleotide consensus sequence 5'-CTGGCCGCGGC-3' consisting of two motifs in the promoters of key developmental regulatory genes. Controls conidiophore formation. This Penicillium rubens (strain ATCC 28089 / DSM 1075 / NRRL 1951 / Wisconsin 54-1255) (Penicillium chrysogenum) protein is Velvet complex subunit B.